Here is a 520-residue protein sequence, read N- to C-terminus: Fusaridione A cluster transcription factor fsdR (520 aa).

The disordered stretch occupies residues 1 to 30 (MSTGPPSGISLVSMTTPRKSGQHTPESWSK).

The protein resides in the nucleus. Functionally, transcription factor that regulates the expression of the gene cluster that mediates the biosynthesis of fusaridione A. The polypeptide is Fusaridione A cluster transcription factor fsdR (Fusarium heterosporum).